A 383-amino-acid chain; its full sequence is MNELEFVTKHRRHLHQHPELSLHEFETTAYIKAFLDSLNIKYDCPLETGVIAYLEGNGSHTIAYRADIDALPILEENDVPYRSQSDHVMHACGHDGHTTALMLFVQRCKDMQDAGQLPQNVVFIFQPAEETGGGANRLIKAGAFDKYPIEAVFGIHVNPFADEGIAVIRDEEITASATEYRFFLTGLSSHVADKEQGHSCGEALQHVLTQISQIQQFHLNGLKRNIVHIGHFKAGEAINTVPSNGYLEGTIRTYDIDDLTIVKNQMHKIAESVKLLFNVDCEVKFAEGYPPTINSPKLRTQIEDALIKADLNVYDKPTPFLFGEDFSFYGQQLAPAYFVFIGTRNEDKGFVTGLHTSHLNFDEKVLINVVNFYENLLNNYKEV.

This sequence belongs to the peptidase M20 family.

This is an uncharacterized protein from Staphylococcus aureus (strain USA300).